The chain runs to 124 residues: Urease subunit beta (124 aa).

Belongs to the urease beta subunit family. Heterotrimer of UreA (gamma), UreB (beta) and UreC (alpha) subunits. Three heterotrimers associate to form the active enzyme.

It localises to the cytoplasm. The enzyme catalyses urea + 2 H2O + H(+) = hydrogencarbonate + 2 NH4(+). The protein operates within nitrogen metabolism; urea degradation; CO(2) and NH(3) from urea (urease route): step 1/1. The chain is Urease subunit beta from Bacillus velezensis (strain DSM 23117 / BGSC 10A6 / LMG 26770 / FZB42) (Bacillus amyloliquefaciens subsp. plantarum).